Here is a 186-residue protein sequence, read N- to C-terminus: Peptidyl-tRNA hydrolase (186 aa).

Residue Tyr-15 participates in tRNA binding. The Proton acceptor role is filled by His-20. Residues Tyr-64, Asn-66, and Asn-112 each coordinate tRNA.

Belongs to the PTH family. In terms of assembly, monomer.

Its subcellular location is the cytoplasm. It carries out the reaction an N-acyl-L-alpha-aminoacyl-tRNA + H2O = an N-acyl-L-amino acid + a tRNA + H(+). Its function is as follows. Hydrolyzes ribosome-free peptidyl-tRNAs (with 1 or more amino acids incorporated), which drop off the ribosome during protein synthesis, or as a result of ribosome stalling. Functionally, catalyzes the release of premature peptidyl moieties from peptidyl-tRNA molecules trapped in stalled 50S ribosomal subunits, and thus maintains levels of free tRNAs and 50S ribosomes. This is Peptidyl-tRNA hydrolase from Azobacteroides pseudotrichonymphae genomovar. CFP2.